A 246-amino-acid polypeptide reads, in one-letter code: Mast cell protease-like protein (246 aa).

The signal sequence occupies residues 1–18 (MQALLFLMALLLPSGAGA). Residues 19-20 (EE) constitute a propeptide, activation peptide. One can recognise a Peptidase S1 domain in the interval 21–244 (IIGGVESEPH…HVPWINRVIK (224 aa)). Residues cysteine 50 and cysteine 66 are joined by a disulfide bond. Catalysis depends on charge relay system residues histidine 65 and aspartate 109. 2 disulfide bridges follow: cysteine 143/cysteine 208 and cysteine 174/cysteine 187. Residue serine 202 is the Charge relay system of the active site.

It belongs to the peptidase S1 family. Granzyme subfamily.

The protein is Mast cell protease-like protein (Mcptl) of Mus musculus (Mouse).